An 88-amino-acid chain; its full sequence is CLAVATA3/ESR (CLE)-related protein 42 (88 aa).

An N-terminal signal peptide occupies residues 1–24 (MRSPHITISLVFLFFLFLIIQTHQ). The interval 69 to 88 (KMIGANEHGVPSGPNPISNR) is disordered. Hydroxyproline is present on residues Pro-79 and Pro-82. Pro-82 is a glycosylation site (O-linked (Ara...) hydroxyproline).

Belongs to the CLV3/ESR signal peptide family. In terms of processing, the O-glycosylation (arabinosylation) of the hydroxyproline Pro-82 enhances binding affinity of the CLE42p peptide for its receptor. Expressed at low levels in seedlings, roots and inflorescence.

The protein resides in the secreted. It is found in the extracellular space. Extracellular signal peptide that regulates cell fate. Represses tracheary element differentiation but promotes the formation of procambial cells. The sequence is that of CLAVATA3/ESR (CLE)-related protein 42 from Arabidopsis thaliana (Mouse-ear cress).